Consider the following 510-residue polypeptide: NAD(P)H-quinone oxidoreductase subunit 2 A, chloroplastic (510 aa).

13 helical membrane-spanning segments follow: residues Leu26–Leu46, Ile57–Phe77, Ile99–Ile119, Met124–Cys144, Leu149–Tyr169, Tyr183–Gly203, Pro227–Ala247, Trp295–Ile315, Met323–Gly342, Tyr354–Leu374, Ala395–Phe415, Leu418–Phe438, and Met484–Ile504.

The protein belongs to the complex I subunit 2 family. NDH is composed of at least 16 different subunits, 5 of which are encoded in the nucleus.

The protein resides in the plastid. The protein localises to the chloroplast thylakoid membrane. The catalysed reaction is a plastoquinone + NADH + (n+1) H(+)(in) = a plastoquinol + NAD(+) + n H(+)(out). It carries out the reaction a plastoquinone + NADPH + (n+1) H(+)(in) = a plastoquinol + NADP(+) + n H(+)(out). NDH shuttles electrons from NAD(P)H:plastoquinone, via FMN and iron-sulfur (Fe-S) centers, to quinones in the photosynthetic chain and possibly in a chloroplast respiratory chain. The immediate electron acceptor for the enzyme in this species is believed to be plastoquinone. Couples the redox reaction to proton translocation, and thus conserves the redox energy in a proton gradient. This Oenothera biennis (German evening primrose) protein is NAD(P)H-quinone oxidoreductase subunit 2 A, chloroplastic.